We begin with the raw amino-acid sequence, 323 residues long: Ubiquinone biosynthesis protein COQ4, mitochondrial (323 aa).

Zn(2+) contacts are provided by H209, D210, H213, and E225.

It belongs to the COQ4 family. In terms of assembly, component of a multi-subunit COQ enzyme complex, composed of at least COQ3, COQ4, COQ5, COQ6, COQ7 and COQ9. Zn(2+) is required as a cofactor.

It localises to the mitochondrion inner membrane. It carries out the reaction a 4-hydroxy-3-methoxy-5-(all-trans-polyprenyl)benzoate + H(+) = a 2-methoxy-6-(all-trans-polyprenyl)phenol + CO2. The protein operates within cofactor biosynthesis; ubiquinone biosynthesis. Its function is as follows. Lyase that catalyzes the C1-decarboxylation of 4-hydroxy-3-methoxy-5-(all-trans-polyprenyl)benzoic acid into 2-methoxy-6-(all-trans-polyprenyl)phenol during ubiquinone biosynthesis. This Debaryomyces hansenii (strain ATCC 36239 / CBS 767 / BCRC 21394 / JCM 1990 / NBRC 0083 / IGC 2968) (Yeast) protein is Ubiquinone biosynthesis protein COQ4, mitochondrial.